Here is a 236-residue protein sequence, read N- to C-terminus: MKGIFGTKVGMTQVFEENGRLIPVTLVRVEPNQVVSVKTKEKDGYDAVQLGFNQTDEKNLNKPQLGHFKKANTNNYKYLEEVRGMVGYKIGDLLKVEELFQEGQVVDVQARTKGRGFTGAIKRWNFKIGSKGHGAGYPHRFQGSVQAGRGGSQAQRVMKGKKMSGHYGNELVTIQNLSIVGFLPEVSSVMISGAIPGANNSKVRITTSKKNPNTVLTYKLIINKKASKPAGEQAQE.

Belongs to the universal ribosomal protein uL3 family. Part of the 50S ribosomal subunit. Forms a cluster with proteins L14 and L19.

One of the primary rRNA binding proteins, it binds directly near the 3'-end of the 23S rRNA, where it nucleates assembly of the 50S subunit. The sequence is that of Large ribosomal subunit protein uL3 from Mycoplasmoides gallisepticum (strain R(low / passage 15 / clone 2)) (Mycoplasma gallisepticum).